We begin with the raw amino-acid sequence, 517 residues long: tRNA-2-methylthio-N(6)-dimethylallyladenosine synthase (517 aa).

Positions 18–137 (RTYQVRTYGC…LPTLLDRARH (120 aa)) constitute an MTTase N-terminal domain. Residues cysteine 27, cysteine 66, cysteine 100, cysteine 174, cysteine 178, and cysteine 181 each contribute to the [4Fe-4S] cluster site. The 238-residue stretch at 160–397 (RESDYAAWVS…ELQEQICMEE (238 aa)) folds into the Radical SAM core domain. Residues 399–470 (RVLIGRIVEL…PHHLIADAGI (72 aa)) form the TRAM domain.

The protein belongs to the methylthiotransferase family. MiaB subfamily. As to quaternary structure, monomer. Requires [4Fe-4S] cluster as cofactor.

Its subcellular location is the cytoplasm. It carries out the reaction N(6)-dimethylallyladenosine(37) in tRNA + (sulfur carrier)-SH + AH2 + 2 S-adenosyl-L-methionine = 2-methylsulfanyl-N(6)-dimethylallyladenosine(37) in tRNA + (sulfur carrier)-H + 5'-deoxyadenosine + L-methionine + A + S-adenosyl-L-homocysteine + 2 H(+). Catalyzes the methylthiolation of N6-(dimethylallyl)adenosine (i(6)A), leading to the formation of 2-methylthio-N6-(dimethylallyl)adenosine (ms(2)i(6)A) at position 37 in tRNAs that read codons beginning with uridine. This is tRNA-2-methylthio-N(6)-dimethylallyladenosine synthase from Mycobacterium leprae (strain TN).